Here is a 534-residue protein sequence, read N- to C-terminus: DNA-directed RNA polymerase III subunit RPC3 (534 aa).

The disordered stretch occupies residues 161–181 (PSVPTTENSDPGPPPPAPTLV). Serine 194 carries the phosphoserine modification. The segment at 197 to 228 (GKGKRRRSSDEDAAGEPKAKRPKYTTDNKEPI) is disordered. The segment covering 211–228 (GEPKAKRPKYTTDNKEPI) has biased composition (basic and acidic residues).

It belongs to the eukaryotic RPC3/POLR3C RNA polymerase subunit family. In terms of assembly, component of the RNA polymerase III complex consisting of 17 subunits: a ten-subunit horseshoe-shaped catalytic core composed of POLR3A/RPC1, POLR3B/RPC2, POLR1C/RPAC1, POLR1D/RPAC2, POLR3K/RPC10, POLR2E/RPABC1, POLR2F/RPABC2, POLR2H/RPABC3, POLR2K/RPABC4 and POLR2L/RPABC5; a mobile stalk composed of two subunits POLR3H/RPC8 and CRCP/RPC9, protruding from the core and functioning primarily in transcription initiation; and additional subunits homologous to general transcription factors of the RNA polymerase II machinery, POLR3C/RPC3-POLR3F/RPC6-POLR3G/RPC7 heterotrimer required for transcription initiation and POLR3D/RPC4-POLR3E/RPC5 heterodimer involved in both transcription initiation and termination. Directly interacts with POLR3G/RPC7 and POLR3GL. Directly interacts with POLR3F/RPC6. Interacts with GTF3C4. As part of the RNA polymerase III complex, interacts with PKP2.

It is found in the nucleus. Functionally, DNA-dependent RNA polymerase catalyzes the transcription of DNA into RNA using the four ribonucleoside triphosphates as substrates. Specific peripheric component of RNA polymerase III (Pol III) which synthesizes small non-coding RNAs including 5S rRNA, snRNAs, tRNAs and miRNAs from at least 500 distinct genomic loci. Part of POLR3C/RPC3-POLR3F/RPC6-POLR3G/RPC7 heterotrimer, coordinates the dynamics of Pol III stalk and clamp modules during the transition from apo to elongation state. Pol III plays a key role in sensing and limiting infection by intracellular bacteria and DNA viruses. Acts as a nuclear and cytosolic DNA sensor involved in innate immune response. Can sense non-self dsDNA that serves as template for transcription into dsRNA. The non-self RNA polymerase III transcripts, such as Epstein-Barr virus-encoded RNAs (EBERs) induce type I interferon and NF-kappa-B through the RIG-I pathway. Preferentially binds single-stranded DNA (ssDNA) in a sequence-independent manner. This chain is DNA-directed RNA polymerase III subunit RPC3, found in Homo sapiens (Human).